We begin with the raw amino-acid sequence, 360 residues long: Chorismate synthase (360 aa).

Residues 36–60 are disordered; it reads LSEDDIQPDLDRRKPGTSKYTTPRR. NADP(+) is bound at residue Arg48. FMN-binding positions include 125–127, 246–247, Gly286, 301–305, and Arg327; these read RSS, NA, and KPTSS.

It belongs to the chorismate synthase family. As to quaternary structure, homotetramer. It depends on FMNH2 as a cofactor.

The catalysed reaction is 5-O-(1-carboxyvinyl)-3-phosphoshikimate = chorismate + phosphate. The protein operates within metabolic intermediate biosynthesis; chorismate biosynthesis; chorismate from D-erythrose 4-phosphate and phosphoenolpyruvate: step 7/7. In terms of biological role, catalyzes the anti-1,4-elimination of the C-3 phosphate and the C-6 proR hydrogen from 5-enolpyruvylshikimate-3-phosphate (EPSP) to yield chorismate, which is the branch point compound that serves as the starting substrate for the three terminal pathways of aromatic amino acid biosynthesis. This reaction introduces a second double bond into the aromatic ring system. This is Chorismate synthase from Histophilus somni (strain 129Pt) (Haemophilus somnus).